The following is a 1337-amino-acid chain: Zinc finger protein 335 (1337 aa).

Disordered stretches follow at residues 1–108 and 198–226; these read MEEN…LVHS and GPTS…PPAP. 2 stretches are compositionally biased toward low complexity: residues 31–45 and 54–63; these read TSEA…AATV and SGVGQSSDGG. The segment at 248–271 adopts a C2H2-type 1 zinc-finger fold; sequence FKCKMCQYRSSTKATLLRHMRERH. The segment at 278–444 is disordered; the sequence is AAAAATGKRG…PPRRRGRPSR (167 aa). The span at 302–332 shows a compositional bias: acidic residues; that stretch reads DRPEEEEEDDDIVDAGAIDDLEEDSDYNPAE. The span at 351–362 shows a compositional bias: basic residues; sequence RPRRRPGRPRKL. Over residues 363–372 the composition is skewed to basic and acidic residues; sequence PRLETSDLHD. Positions 378-388 are enriched in polar residues; that stretch reads LVSSQSTQSPP. 8 C2H2-type zinc fingers span residues 466–488, 496–518, 524–546, 563–585, 591–613, 622–644, 650–673, and 679–702; these read YLCR…VNSH, FRCL…MFNH, YKCD…AAVH, FPCP…MKTH, HMCD…LLTH, FKCE…QLSH, FKCS…AVKH, and FACE…RCRH. 2 disordered regions span residues 733 to 767 and 963 to 999; these read LKQQ…TPPL and QCGG…ASHT. The span at 741 to 756 shows a compositional bias: pro residues; it reads PGPPLSSPGPEAPQEP. Phosphoserine is present on residues S976 and S1007. 4 C2H2-type zinc fingers span residues 1019–1041, 1047–1069, 1075–1097, and 1103–1126; these read FSCK…KRAH, FKCP…MAQH, HQCN…MLTH, and FSCH…QRLH. K1022 is covalently cross-linked (Glycyl lysine isopeptide (Lys-Gly) (interchain with G-Cter in SUMO2)). Residue S1149 is modified to Phosphoserine.

Belongs to the krueppel C2H2-type zinc-finger protein family. Interacts with NCOA6; may enhance ligand-dependent transcriptional activation by nuclear hormone receptors. Interacts with CNOT6. Interacts with CNOT9; the interaction is direct. Component of a nuclear receptor-mediated transcription complex composed of at least ZNF335, CCAR2 and EMSY; the complex stimulates the transcription of nuclear receptor target genes such as SOX9 and HOXA1. Within the complex interacts with EMSY and interacts (via C-terminus) with CCAR2. Interacts with members of histone H3'Lys4'(H3K4) methyltransferase complexes ASH2L, CXXC1, KMT2A/MLL1, RBBP5, SETD1A and WDR5. Component of a histone methylation complex composed of at least ZNF335, RBBP5, ASH2L and WDR5; the complex may have histone H3-specific methyltransferase activity, however does not have specificity for 'Lys-4' of histone H3. Interacts with RBBP5 and WDR5. Interacts with ASHL2. Components of this complex may associate with components of the ZNF335-CCAR2-EMSY nuclear receptor-mediated transcription complex to form a complex at least composed of ZNF335, HCFC1, CCAR2, EMSY, MKI67, RBBP5, ASH2L and WDR5. Within this complex also interacts with HCFC1 and MKI67. As to expression, expressed at low levels in cerebral cortex, hippocampus and cerebellum (at protein level).

The protein resides in the nucleus. Its function is as follows. Component or associated component of some histone methyltransferase complexes may regulate transcription through recruitment of those complexes on gene promoters. Enhances ligand-dependent transcriptional activation by nuclear hormone receptors. Plays an important role in neural progenitor cell proliferation and self-renewal through the regulation of specific genes involved brain development, including REST. Also controls the expression of genes involved in somatic development and regulates, for instance, lymphoblast proliferation. The sequence is that of Zinc finger protein 335 (Znf335) from Mus musculus (Mouse).